Here is a 612-residue protein sequence, read N- to C-terminus: Siderophore iron transporter 1 (612 aa).

5 positions are modified to phosphoserine: serine 5, serine 21, serine 22, serine 36, and serine 41. Transmembrane regions (helical) follow at residues 91-111 (ISFY…SFQA), 125-145 (FAGH…SAAI), 159-179 (LEAF…MAAS), 188-208 (GSVL…IFMA), 218-238 (LVLG…PRVA), 249-269 (WGIA…LAVY), 299-319 (IIGL…ISLA), 331-351 (FIVM…YEIF), 365-385 (EPTI…FYCW), 406-426 (YISY…GILI), 434-453 (WYFV…MIRY), 464-484 (IMPQ…LTVA), 495-515 (AIVT…GSAI), and 573-593 (ILTS…WFVA).

This sequence belongs to the major facilitator superfamily.

Its subcellular location is the membrane. In terms of biological role, involved in the transport of siderophore iron and so has a role in iron homeostasis. This Schizosaccharomyces pombe (strain 972 / ATCC 24843) (Fission yeast) protein is Siderophore iron transporter 1 (str1).